A 72-amino-acid polypeptide reads, in one-letter code: DNA gyrase inhibitor YacG (72 aa).

The Zn(2+) site is built by cysteine 17, cysteine 20, cysteine 32, and cysteine 36. Residues 52-72 are disordered; it reads PGPEEDEMSYPPHSNDGNRSR.

This sequence belongs to the DNA gyrase inhibitor YacG family. In terms of assembly, interacts with GyrB. It depends on Zn(2+) as a cofactor.

Inhibits all the catalytic activities of DNA gyrase by preventing its interaction with DNA. Acts by binding directly to the C-terminal domain of GyrB, which probably disrupts DNA binding by the gyrase. This Methylorubrum extorquens (strain CM4 / NCIMB 13688) (Methylobacterium extorquens) protein is DNA gyrase inhibitor YacG.